The primary structure comprises 217 residues: Large ribosomal subunit protein uL3 (217 aa).

The disordered stretch occupies residues 137–160; sequence VSASHGSHRNHRKPGSIGASSTPS.

The protein belongs to the universal ribosomal protein uL3 family. Part of the 50S ribosomal subunit. Forms a cluster with proteins L14 and L19.

In terms of biological role, one of the primary rRNA binding proteins, it binds directly near the 3'-end of the 23S rRNA, where it nucleates assembly of the 50S subunit. This Clavibacter sepedonicus (Clavibacter michiganensis subsp. sepedonicus) protein is Large ribosomal subunit protein uL3.